A 311-amino-acid polypeptide reads, in one-letter code: tRNA-cytidine(32) 2-sulfurtransferase (311 aa).

Residues 45–50 (SGGKDS) carry the PP-loop motif motif. C120, C123, and C211 together coordinate [4Fe-4S] cluster.

This sequence belongs to the TtcA family. In terms of assembly, homodimer. Requires Mg(2+) as cofactor. The cofactor is [4Fe-4S] cluster.

Its subcellular location is the cytoplasm. The catalysed reaction is cytidine(32) in tRNA + S-sulfanyl-L-cysteinyl-[cysteine desulfurase] + AH2 + ATP = 2-thiocytidine(32) in tRNA + L-cysteinyl-[cysteine desulfurase] + A + AMP + diphosphate + H(+). It participates in tRNA modification. Catalyzes the ATP-dependent 2-thiolation of cytidine in position 32 of tRNA, to form 2-thiocytidine (s(2)C32). The sulfur atoms are provided by the cysteine/cysteine desulfurase (IscS) system. The sequence is that of tRNA-cytidine(32) 2-sulfurtransferase from Shewanella pealeana (strain ATCC 700345 / ANG-SQ1).